Consider the following 312-residue polypeptide: Protein-glutamate methylesterase/protein-glutamine glutaminase (312 aa).

One can recognise a Response regulatory domain in the interval 5 to 122 (RVLSVDDSAL…REGMLAYSEM (118 aa)). Residue Asp-56 is modified to 4-aspartylphosphate. Residues 152 to 307 (LLSSEKLIAI…QQMLAKISAG (156 aa)) form the CheB-type methylesterase domain. Active-site residues include Ser-164, His-190, and Asp-249.

Belongs to the CheB family. In terms of processing, phosphorylated by CheA. Phosphorylation of the N-terminal regulatory domain activates the methylesterase activity.

Its subcellular location is the cytoplasm. The enzyme catalyses [protein]-L-glutamate 5-O-methyl ester + H2O = L-glutamyl-[protein] + methanol + H(+). It carries out the reaction L-glutaminyl-[protein] + H2O = L-glutamyl-[protein] + NH4(+). Functionally, involved in chemotaxis. Part of a chemotaxis signal transduction system that modulates chemotaxis in response to various stimuli. Catalyzes the demethylation of specific methylglutamate residues introduced into the chemoreceptors (methyl-accepting chemotaxis proteins or MCP) by CheR. Also mediates the irreversible deamidation of specific glutamine residues to glutamic acid. The protein is Protein-glutamate methylesterase/protein-glutamine glutaminase of Shigella boydii serotype 4 (strain Sb227).